The sequence spans 206 residues: LexA repressor (206 aa).

The segment at residues 28–48 (RAEIARRLGFKSANAAEEHLK) is a DNA-binding region (H-T-H motif). Catalysis depends on for autocatalytic cleavage activity residues S123 and K160.

It belongs to the peptidase S24 family. In terms of assembly, homodimer.

The enzyme catalyses Hydrolysis of Ala-|-Gly bond in repressor LexA.. Its function is as follows. Represses a number of genes involved in the response to DNA damage (SOS response), including recA and lexA. In the presence of single-stranded DNA, RecA interacts with LexA causing an autocatalytic cleavage which disrupts the DNA-binding part of LexA, leading to derepression of the SOS regulon and eventually DNA repair. The polypeptide is LexA repressor (Shewanella halifaxensis (strain HAW-EB4)).